We begin with the raw amino-acid sequence, 129 residues long: Small ribosomal subunit protein uS11 (129 aa).

This sequence belongs to the universal ribosomal protein uS11 family. In terms of assembly, part of the 30S ribosomal subunit. Interacts with proteins S7 and S18. Binds to IF-3.

Functionally, located on the platform of the 30S subunit, it bridges several disparate RNA helices of the 16S rRNA. Forms part of the Shine-Dalgarno cleft in the 70S ribosome. This is Small ribosomal subunit protein uS11 from Geobacillus kaustophilus (strain HTA426).